The following is a 227-amino-acid chain: MALSIFKDLPAEHPRHLIPSLCRQFYHLGWVTGTGGGMSIKYNDEIYIAPSGVQKERMQPEDLFVQDITGKDLQLPPEIKGLKKSQCTPLFMLAYQHRQAGAVIHTHSQHAVMATLLWPGKTFRCTHLEMIKGVYDEADKRYLRYDEELVVPIIENTPFERDLADSMYAAMMEYPGCSAILVRRHGVYVWGQNWEKAKTMSECYDYLFSIAVEMKKAGIDPEKFESS.

Cys-87 provides a ligand contact to substrate. Residues His-105 and His-107 each coordinate Zn(2+). The Proton donor/acceptor role is filled by Glu-129. His-185 serves as a coordination point for Zn(2+).

This sequence belongs to the aldolase class II family. MtnB subfamily. Zn(2+) serves as cofactor.

It is found in the cytoplasm. It catalyses the reaction 5-(methylsulfanyl)-D-ribulose 1-phosphate = 5-methylsulfanyl-2,3-dioxopentyl phosphate + H2O. The protein operates within amino-acid biosynthesis; L-methionine biosynthesis via salvage pathway; L-methionine from S-methyl-5-thio-alpha-D-ribose 1-phosphate: step 2/6. In terms of biological role, catalyzes the dehydration of methylthioribulose-1-phosphate (MTRu-1-P) into 2,3-diketo-5-methylthiopentyl-1-phosphate (DK-MTP-1-P). The chain is Probable methylthioribulose-1-phosphate dehydratase from Drosophila melanogaster (Fruit fly).